Reading from the N-terminus, the 1010-residue chain is Pre-mRNA-splicing factor cwc22 (1010 aa).

The span at 1–10 (MASADMSPSR) shows a compositional bias: polar residues. Residues 1 to 166 (MASADMSPSR…RTPTPPPVAV (166 aa)) form a disordered region. Residues 18–28 (RSPSPRTQSPS) are compositionally biased toward low complexity. Composition is skewed to basic and acidic residues over residues 29-39 (PRDEDGSRSPG) and 65-78 (PRRD…DQPH). The segment covering 84-109 (RSPTPRSQSPSRRSVRSPSPRQGSPA) has biased composition (low complexity). Over residues 142–158 (RHRDAGGDYRPVRKERT) the composition is skewed to basic and acidic residues. Residues 222 to 405 (KKSVNGLVNK…EVLFQVRKDK (184 aa)) enclose the MIF4G domain. Positions 466–498 (GEASDDDEDDDDDDESESGSESEDEEQKALEIK) are disordered. Positions 468–491 (ASDDDEDDDDDDESESGSESEDEE) are enriched in acidic residues. Residues 507-623 (NLRRTIYLSI…GWHVFSVIHL (117 aa)) enclose the MI domain. Residues 708–1010 (LPAPPADSDS…SPVAKRGRVD (303 aa)) form a disordered region. The span at 718–732 (ESVSSYSSYSSYSSR) shows a compositional bias: low complexity. Basic residues predominate over residues 753-775 (PPRRGRGRSYSRTPSRSRSRSRS). Low complexity predominate over residues 776–787 (YSRSVSKSVSRS). Composition is skewed to basic residues over residues 834–846 (RRGR…RSRS) and 899–910 (RLRRGSYSRSRS). Positions 911-935 (RSPIPIRGNGPAGRDTGRAGPAPAR) are enriched in low complexity. Residues 936–948 (GGRRNRSYSRSRT) show a composition bias toward basic residues. The segment covering 961-973 (SRRVVSRSPSPVV) has biased composition (low complexity). A compositionally biased stretch (basic residues) spans 976-1010 (NKRRRSYSSSRSRSRSSSRSRYRSRSPVAKRGRVD).

It belongs to the CWC22 family. In terms of assembly, associated with the spliceosome.

It is found in the cytoplasm. Its subcellular location is the nucleus. Involved in pre-mRNA splicing. The chain is Pre-mRNA-splicing factor cwc22 (msp-1) from Neurospora crassa (strain ATCC 24698 / 74-OR23-1A / CBS 708.71 / DSM 1257 / FGSC 987).